The following is a 704-amino-acid chain: MARTTPIARYRNIGISAHIDAGKTTTTERILFYTGVNHKIGEVHDGAATMDWMEQEQERGITITSAATTAFWSGMAKQYEPHRINIIDTPGHVDFTIEVERSMRVLDGAVMVYCAVGGVQPQSETVWRQANKYKVPRIAFVNKMDRMGANFLKVVNQIKTRLGANPVPLQLAIGAEEHFTGVVDLVKMKAINWNDADQGVTFEYEDIPADMVELANEWHQNLIESAAEASEELMEKYLGGEELTEEEIKGALRQRVLNNEIILVTCGSAFKNKGVQAMLDAVIDYLPSPVDVPAINGILDDGKDTPAERHASDDEPFSALAFKIATDPFVGNLTFFRVYSGVVNSGDTVLNSVKAARERFGRIVQMHANKREEIKEVRAGDIAAAIGLKDVTTGDTLCDPDAPIILERMEFPEPVISIAVEPKTKADQEKMGLALGRLAKEDPSFRVWTDEESNQTIIAGMGELHLDIIVDRMKREFNVEANVGKPQVAYRETIRQKVTDVEGKHAKQSGGRGQYGHVVIDMYPLEPGSNPKGYEFINDIKGGVIPGEYIPAVDKGIQEQLKAGPLAGYPVVDMGIRLHFGSYHDVDSSELAFKLAASIAFKEGFKKAKPVLLEPIMKVEVETPEENTGDVIGDLSRRRGMLKGQESEVTGVKIHAEVPLSEMFGYATQLRSLTKGRASYTMEFLKYDEAPSNVAQAVIEARGK.

The 283-residue stretch at 8-290 folds into the tr-type G domain; it reads ARYRNIGISA…AVIDYLPSPV (283 aa). GTP-binding positions include 17-24, 88-92, and 142-145; these read AHIDAGKT, DTPGH, and NKMD. Residues lysine 504 and lysine 643 each carry the N6-acetyllysine modification.

This sequence belongs to the TRAFAC class translation factor GTPase superfamily. Classic translation factor GTPase family. EF-G/EF-2 subfamily.

The protein resides in the cytoplasm. In terms of biological role, catalyzes the GTP-dependent ribosomal translocation step during translation elongation. During this step, the ribosome changes from the pre-translocational (PRE) to the post-translocational (POST) state as the newly formed A-site-bound peptidyl-tRNA and P-site-bound deacylated tRNA move to the P and E sites, respectively. Catalyzes the coordinated movement of the two tRNA molecules, the mRNA and conformational changes in the ribosome. This chain is Elongation factor G, found in Escherichia coli O17:K52:H18 (strain UMN026 / ExPEC).